Reading from the N-terminus, the 65-residue chain is Large ribosomal subunit protein bL35 (65 aa).

This sequence belongs to the bacterial ribosomal protein bL35 family.

This Erwinia tasmaniensis (strain DSM 17950 / CFBP 7177 / CIP 109463 / NCPPB 4357 / Et1/99) protein is Large ribosomal subunit protein bL35.